The primary structure comprises 213 residues: A-type ATP synthase subunit D (213 aa).

This sequence belongs to the V-ATPase D subunit family. Has multiple subunits with at least A(3), B(3), C, D, E, F, H, I and proteolipid K(x).

It localises to the cell membrane. Component of the A-type ATP synthase that produces ATP from ADP in the presence of a proton gradient across the membrane. The polypeptide is A-type ATP synthase subunit D (Thermoplasma acidophilum (strain ATCC 25905 / DSM 1728 / JCM 9062 / NBRC 15155 / AMRC-C165)).